The chain runs to 344 residues: Uroporphyrinogen decarboxylase (344 aa).

Substrate contacts are provided by residues 23–27, Asp73, Tyr149, Thr204, and His321; that span reads RQAGR.

It belongs to the uroporphyrinogen decarboxylase family. In terms of assembly, homodimer.

The protein resides in the cytoplasm. It catalyses the reaction uroporphyrinogen III + 4 H(+) = coproporphyrinogen III + 4 CO2. It functions in the pathway porphyrin-containing compound metabolism; protoporphyrin-IX biosynthesis; coproporphyrinogen-III from 5-aminolevulinate: step 4/4. In terms of biological role, catalyzes the decarboxylation of four acetate groups of uroporphyrinogen-III to yield coproporphyrinogen-III. In Francisella tularensis subsp. mediasiatica (strain FSC147), this protein is Uroporphyrinogen decarboxylase.